A 276-amino-acid chain; its full sequence is Protein canopy homolog 3 (276 aa).

An N-terminal signal peptide occupies residues 1 to 26 (MESMSELAPRCLLFPLLLLLPLLLLP). Residues 47-269 (SKCEVCKYVA…EGVQKASPLP (223 aa)) form the Saposin B-type domain. 3 cysteine pairs are disulfide-bonded: Cys49–Cys206, Cys52–Cys194, and Cys104–Cys166. N-linked (GlcNAc...) asparagine glycosylation is present at Asn153. Residues 153 to 179 (NETSAEVADLKKQCDVLVEEFEEVIED) adopt a coiled-coil conformation. Residues 218 to 276 (IASLGGKKSKKKRSGVKGSSSGSSKQRKELGGLGEDANAEEEEGVQKASPLPHSPPDEL) are disordered.

Belongs to the canopy family. As to quaternary structure, interacts with HSP90B1; this interaction is disrupted in the presence of ATP. Interacts with TLR1, TLR2, TLR4 and TLR9. Strongest interaction with TLR4.

Its subcellular location is the endoplasmic reticulum. Functionally, toll-like receptor (TLR)-specific co-chaperone for HSP90B1. Required for proper TLR folding, except that of TLR3, and hence controls TLR exit from the endoplasmic reticulum. Consequently, required for both innate and adaptive immune responses. The polypeptide is Protein canopy homolog 3 (Cnpy3) (Mus musculus (Mouse)).